Consider the following 290-residue polypeptide: Endoplasmic reticulum-Golgi intermediate compartment protein 1 (290 aa).

Residues methionine 1–alanine 26 are Cytoplasmic-facing. The helical transmembrane segment at isoleucine 27–phenylalanine 47 threads the bilayer. Over isoleucine 48–threonine 254 the chain is Lumenal. Asparagine 74 is a glycosylation site (N-linked (GlcNAc...) asparagine). The chain crosses the membrane as a helical span at residues threonine 255 to phenylalanine 275. Topologically, residues threonine 276–histidine 290 are cytoplasmic.

The protein belongs to the ERGIC family. May form a heteromeric complex composed of ERGIC1, ERGIC2 and ERGIC3. Within the complex, the interaction with ERGIC3 is direct. Interacts with ERGIC3/ERV46. In terms of processing, N-glycosylated.

It localises to the endoplasmic reticulum membrane. It is found in the endoplasmic reticulum-Golgi intermediate compartment membrane. The protein localises to the golgi apparatus membrane. Its function is as follows. Possible role in transport between endoplasmic reticulum and Golgi. The chain is Endoplasmic reticulum-Golgi intermediate compartment protein 1 (ERGIC1) from Homo sapiens (Human).